The following is a 170-amino-acid chain: Photosystem II extrinsic protein V (170 aa).

Positions 1-33 (MASFFSTLRRSLNRLLIALPVLLGLMISTPAQA) are cleaved as a signal peptide. Heme c is bound by residues Cys-70, Cys-73, His-74, and His-125.

Belongs to the cytochrome c family. PsbV subfamily. PSII is composed of 1 copy each of membrane proteins PsbA, PsbB, PsbC, PsbD, PsbE, PsbF, PsbH, PsbI, PsbJ, PsbK, PsbL, PsbM, PsbT, PsbX, PsbY, PsbZ, Psb30/Ycf12, peripheral proteins PsbO, CyanoQ (PsbQ), PsbU, PsbV and a large number of cofactors. It forms dimeric complexes. The cofactor is heme c.

It localises to the cellular thylakoid membrane. In terms of biological role, one of the extrinsic, lumenal subunits of photosystem II (PSII). PSII is a light-driven water plastoquinone oxidoreductase, using light energy to abstract electrons from H(2)O, generating a proton gradient subsequently used for ATP formation. The extrinsic proteins stabilize the structure of photosystem II oxygen-evolving complex (OEC), the ion environment of oxygen evolution and protect the OEC against heat-induced inactivation. Low-potential cytochrome c that plays a role in the OEC of PSII. This Synechococcus sp. (strain CC9311) protein is Photosystem II extrinsic protein V.